A 304-amino-acid polypeptide reads, in one-letter code: Retrotransposon Gag-like protein 4 (304 aa).

The CCHC-type zinc-finger motif lies at 276 to 293 (QLCVYCNQAGHFTRDCLA).

As to expression, in adults, expressed in brain, eye, kidney, ovary and testis. Weakly expressed in thymus, heart and muscle.

Functionally, involved in cognitive function in the brain, possibly via the noradrenergic system. The sequence is that of Retrotransposon Gag-like protein 4 from Mus musculus (Mouse).